A 205-amino-acid polypeptide reads, in one-letter code: MFLRHVIVFSLIALLTGCAGLTSREAVQGKGDPAQWREHKQQLSSLDGWQINGKVGIRAPKDSGSGTLFWLQRQDYYDIRLSGPLGRGAARLTGRPGAVALEVANQGRYEATTPETLLQDQLGWKLPVSHLVWWVRGLPAPDSKSSVTLDGDSRLASLEQDGWQVEYLSYVEQNGYWLPERVKLHGQDLDVTLVIKDWQPRKLGQ.

An N-terminal signal peptide occupies residues 1-17 (MFLRHVIVFSLIALLTG). C18 carries the N-palmitoyl cysteine lipid modification. C18 carries S-diacylglycerol cysteine lipidation.

This sequence belongs to the LolB family. As to quaternary structure, monomer.

Its subcellular location is the cell outer membrane. Its function is as follows. Plays a critical role in the incorporation of lipoproteins in the outer membrane after they are released by the LolA protein. In Pseudomonas savastanoi pv. phaseolicola (strain 1448A / Race 6) (Pseudomonas syringae pv. phaseolicola (strain 1448A / Race 6)), this protein is Outer-membrane lipoprotein LolB.